The primary structure comprises 136 residues: Inner membrane protein YbhQ (136 aa).

The Cytoplasmic portion of the chain corresponds to 1 to 12 (MKWQQRVRVATG). A helical membrane pass occupies residues 13-33 (LSCWQIMLHLLVVALLVVGWM). Topologically, residues 34-37 (SKTL) are periplasmic. A helical membrane pass occupies residues 38 to 58 (VHVGVGLCALYCVTVVMMLVF). Residues 59 to 71 (QRHPEQRWREVAD) are Cytoplasmic-facing. Residues 72–92 (VLEELTTTWYFGAALIVLWLL) traverse the membrane as a helical segment. Residues 93-99 (SRVLENN) are Periplasmic-facing. A helical transmembrane segment spans residues 100–120 (FLLAIAGLAILAGPAVVSLLA). Residues 121-136 (KDKKLHHLTSKHRVRR) are Cytoplasmic-facing.

It is found in the cell inner membrane. This Escherichia coli O157:H7 protein is Inner membrane protein YbhQ (ybhQ).